The sequence spans 297 residues: Small ribosomal subunit biogenesis GTPase RsgA (297 aa).

Residues 65 to 223 (INEIGRPAVA…IADTPGFSAI (159 aa)) form the CP-type G domain. GTP contacts are provided by residues 114–117 (SKSD) and 166–174 (GQSGAGKST). The Zn(2+) site is built by Cys247, Cys252, His254, and Cys260.

It belongs to the TRAFAC class YlqF/YawG GTPase family. RsgA subfamily. In terms of assembly, monomer. Associates with 30S ribosomal subunit, binds 16S rRNA. Zn(2+) serves as cofactor.

It localises to the cytoplasm. In terms of biological role, one of several proteins that assist in the late maturation steps of the functional core of the 30S ribosomal subunit. Helps release RbfA from mature subunits. May play a role in the assembly of ribosomal proteins into the subunit. Circularly permuted GTPase that catalyzes slow GTP hydrolysis, GTPase activity is stimulated by the 30S ribosomal subunit. The chain is Small ribosomal subunit biogenesis GTPase RsgA from Lactobacillus johnsonii (strain CNCM I-12250 / La1 / NCC 533).